We begin with the raw amino-acid sequence, 495 residues long: Syntaphilin (495 aa).

The interval 1–74 is disordered; it reads MAMSLQGSRR…HGIKPPTPEQ (74 aa). Low complexity predominate over residues 7 to 49; sequence GSRRASAGSRRRTSPPVSVRDAYGTSSLSSSSNSGSCKGSDSS. The stretch at 79 to 161 forms a coiled coil; it reads LQQKEVCIRH…VKNNLIDKDK (83 aa). The tract at residues 191–244 is disordered; the sequence is VAKEEGTGESAGGSPARSLTRSSTYTKLSDPAVCGDRQPGDPSNTSAEDGADSG. Phosphoserine is present on residues S200 and S204. Residues 207-217 show a composition bias toward polar residues; the sequence is RSLTRSSTYTK. At T214 the chain carries Phosphothreonine. S219 bears the Phosphoserine mark. T235 is subject to Phosphothreonine. The chain crosses the membrane as a helical span at residues 427-446; that stretch reads YIVDLLAVVVPAVPTVAWLC.

In terms of assembly, binds to STX1A. Interacts with DNM1; this interaction inhibits the binding of DNM1 to AMPH and DNM1-receptor-mediated endocytosis.

The protein resides in the membrane. It is found in the synapse. Its subcellular location is the synaptosome. In terms of biological role, inhibits SNARE complex formation by absorbing free STX1A. The chain is Syntaphilin from Mus musculus (Mouse).